A 199-amino-acid polypeptide reads, in one-letter code: 3-isopropylmalate dehydratase small subunit (199 aa).

Belongs to the LeuD family. LeuD type 1 subfamily. Heterodimer of LeuC and LeuD.

The enzyme catalyses (2R,3S)-3-isopropylmalate = (2S)-2-isopropylmalate. It functions in the pathway amino-acid biosynthesis; L-leucine biosynthesis; L-leucine from 3-methyl-2-oxobutanoate: step 2/4. In terms of biological role, catalyzes the isomerization between 2-isopropylmalate and 3-isopropylmalate, via the formation of 2-isopropylmaleate. The sequence is that of 3-isopropylmalate dehydratase small subunit from Bacillus pumilus (strain SAFR-032).